We begin with the raw amino-acid sequence, 226 residues long: Ribonuclease 3 (226 aa).

An RNase III domain is found at 6–128; sequence INRLQRKLGY…LIGGVFLDSN (123 aa). A Mg(2+)-binding site is contributed by Glu-41. Asp-45 is a catalytic residue. Residues Asp-114 and Glu-117 each coordinate Mg(2+). Glu-117 is a catalytic residue. The DRBM domain maps to 155–225; sequence DPKTRLQEYL…AEQVLKKLEL (71 aa).

The protein belongs to the ribonuclease III family. In terms of assembly, homodimer. Mg(2+) serves as cofactor.

Its subcellular location is the cytoplasm. It carries out the reaction Endonucleolytic cleavage to 5'-phosphomonoester.. Digests double-stranded RNA. Involved in the processing of primary rRNA transcript to yield the immediate precursors to the large and small rRNAs (23S and 16S). Processes some mRNAs, and tRNAs when they are encoded in the rRNA operon. Processes pre-crRNA and tracrRNA of type II CRISPR loci if present in the organism. The polypeptide is Ribonuclease 3 (Salmonella choleraesuis (strain SC-B67)).